A 456-amino-acid chain; its full sequence is Phosphoglucomutase/phosphomannomutase (456 aa).

Ser101 serves as the catalytic Phosphoserine intermediate. The Mg(2+) site is built by Ser101, Asp243, Asp245, and Asp247. Ser101 carries the post-translational modification Phosphoserine; by autocatalysis.

It belongs to the phosphohexose mutase family. In terms of assembly, homotetramer. Mg(2+) serves as cofactor. Post-translationally, activated by phosphorylation.

The enzyme catalyses alpha-D-glucose 1-phosphate = alpha-D-glucose 6-phosphate. It catalyses the reaction alpha-D-mannose 1-phosphate = D-mannose 6-phosphate. In terms of biological role, catalyzes the interconversion of glucose 1-phosphate and glucose 6-phosphate, and the interconversion of mannose 1-phosphate and mannose 6-phosphate. Also displays low activity with deoxyribose 1-phosphate and glucosamine 1-phosphate. The polypeptide is Phosphoglucomutase/phosphomannomutase (Thermococcus kodakarensis (strain ATCC BAA-918 / JCM 12380 / KOD1) (Pyrococcus kodakaraensis (strain KOD1))).